The following is a 485-amino-acid chain: GTPase Der (485 aa).

EngA-type G domains are found at residues P3–E167 and P176–M349. Residues G9–S16, D56–F60, N119–E122, G182–S189, D229–V233, and N294–D297 contribute to the GTP site. Positions I350–E434 constitute a KH-like domain. The disordered stretch occupies residues N435–K485. Over residues R457–N469 the composition is skewed to basic and acidic residues. Over residues R470–K485 the composition is skewed to basic residues.

This sequence belongs to the TRAFAC class TrmE-Era-EngA-EngB-Septin-like GTPase superfamily. EngA (Der) GTPase family. In terms of assembly, associates with the 50S ribosomal subunit.

GTPase that plays an essential role in the late steps of ribosome biogenesis. The chain is GTPase Der from Neisseria meningitidis serogroup C / serotype 2a (strain ATCC 700532 / DSM 15464 / FAM18).